We begin with the raw amino-acid sequence, 248 residues long: Probable phosphatase VS_II0429 (248 aa).

Residues His-8, His-10, His-16, His-41, Glu-74, His-102, His-132, Asp-194, and His-196 each coordinate Zn(2+).

The protein belongs to the PHP family. Zn(2+) is required as a cofactor.

The chain is Probable phosphatase VS_II0429 from Vibrio atlanticus (strain LGP32) (Vibrio splendidus (strain Mel32)).